We begin with the raw amino-acid sequence, 154 residues long: UPF0225 protein Spro_2712 (154 aa).

The protein belongs to the UPF0225 family.

The protein is UPF0225 protein Spro_2712 of Serratia proteamaculans (strain 568).